The primary structure comprises 339 residues: D-erythrose-4-phosphate dehydrogenase (339 aa).

12 to 13 (RI) lines the NAD(+) pocket. Residues 154–156 (SCT), arginine 200, 213–214 (TK), and arginine 236 each bind substrate. Catalysis depends on cysteine 155, which acts as the Nucleophile. Asparagine 318 contacts NAD(+).

Belongs to the glyceraldehyde-3-phosphate dehydrogenase family. Epd subfamily. In terms of assembly, homotetramer.

The protein resides in the cytoplasm. The enzyme catalyses D-erythrose 4-phosphate + NAD(+) + H2O = 4-phospho-D-erythronate + NADH + 2 H(+). It functions in the pathway cofactor biosynthesis; pyridoxine 5'-phosphate biosynthesis; pyridoxine 5'-phosphate from D-erythrose 4-phosphate: step 1/5. Catalyzes the NAD-dependent conversion of D-erythrose 4-phosphate to 4-phosphoerythronate. The chain is D-erythrose-4-phosphate dehydrogenase from Enterobacter sp. (strain 638).